The sequence spans 292 residues: Ribosomal RNA small subunit methyltransferase A (292 aa).

The S-adenosyl-L-methionine site is built by Asn-28, Leu-30, Gly-55, Glu-76, Asp-101, and Asn-126.

The protein belongs to the class I-like SAM-binding methyltransferase superfamily. rRNA adenine N(6)-methyltransferase family. RsmA subfamily.

The protein localises to the cytoplasm. It carries out the reaction adenosine(1518)/adenosine(1519) in 16S rRNA + 4 S-adenosyl-L-methionine = N(6)-dimethyladenosine(1518)/N(6)-dimethyladenosine(1519) in 16S rRNA + 4 S-adenosyl-L-homocysteine + 4 H(+). Its function is as follows. Specifically dimethylates two adjacent adenosines (A1518 and A1519) in the loop of a conserved hairpin near the 3'-end of 16S rRNA in the 30S particle. May play a critical role in biogenesis of 30S subunits. The polypeptide is Ribosomal RNA small subunit methyltransferase A (Bacillus mycoides (strain KBAB4) (Bacillus weihenstephanensis)).